Consider the following 264-residue polypeptide: uncharacterized protein (264 aa).

The N-terminal stretch at 1–22 is a signal peptide; the sequence is MIHSKKLTLGICLVLLIILIGG. Cysteine 23 is lipidated: N-palmitoyl cysteine. The S-diacylglycerol cysteine moiety is linked to residue cysteine 23.

This sequence belongs to the staphylococcal tandem lipoprotein family.

It localises to the cell membrane. This is an uncharacterized protein from Staphylococcus aureus (strain N315).